A 164-amino-acid polypeptide reads, in one-letter code: CB1 cannabinoid receptor-interacting protein 1 (164 aa).

It belongs to the CNRIP family. Interacts with the cannabinoid receptor CNR1 (via C-terminus). Does not interact with cannabinoid receptor CNR2.

Functionally, suppresses cannabinoid receptor CNR1-mediated tonic inhibition of voltage-gated calcium channels. In Bos taurus (Bovine), this protein is CB1 cannabinoid receptor-interacting protein 1 (CNRIP1).